A 460-amino-acid chain; its full sequence is Proline--tRNA ligase (460 aa).

The protein belongs to the class-II aminoacyl-tRNA synthetase family. ProS type 3 subfamily. Homodimer.

The protein localises to the cytoplasm. The enzyme catalyses tRNA(Pro) + L-proline + ATP = L-prolyl-tRNA(Pro) + AMP + diphosphate. Its function is as follows. Catalyzes the attachment of proline to tRNA(Pro) in a two-step reaction: proline is first activated by ATP to form Pro-AMP and then transferred to the acceptor end of tRNA(Pro). The protein is Proline--tRNA ligase of Methanococcus maripaludis (strain C7 / ATCC BAA-1331).